Reading from the N-terminus, the 283-residue chain is Phosphatidylserine decarboxylase proenzyme (283 aa).

Active-site charge relay system; for autoendoproteolytic cleavage activity residues include aspartate 88, histidine 145, and serine 248. The active-site Schiff-base intermediate with substrate; via pyruvic acid; for decarboxylase activity is the serine 248. Serine 248 bears the Pyruvic acid (Ser); by autocatalysis mark.

This sequence belongs to the phosphatidylserine decarboxylase family. PSD-B subfamily. Prokaryotic type I sub-subfamily. Heterodimer of a large membrane-associated beta subunit and a small pyruvoyl-containing alpha subunit. Pyruvate is required as a cofactor. In terms of processing, is synthesized initially as an inactive proenzyme. Formation of the active enzyme involves a self-maturation process in which the active site pyruvoyl group is generated from an internal serine residue via an autocatalytic post-translational modification. Two non-identical subunits are generated from the proenzyme in this reaction, and the pyruvate is formed at the N-terminus of the alpha chain, which is derived from the carboxyl end of the proenzyme. The autoendoproteolytic cleavage occurs by a canonical serine protease mechanism, in which the side chain hydroxyl group of the serine supplies its oxygen atom to form the C-terminus of the beta chain, while the remainder of the serine residue undergoes an oxidative deamination to produce ammonia and the pyruvoyl prosthetic group on the alpha chain. During this reaction, the Ser that is part of the protease active site of the proenzyme becomes the pyruvoyl prosthetic group, which constitutes an essential element of the active site of the mature decarboxylase.

It localises to the cell membrane. It catalyses the reaction a 1,2-diacyl-sn-glycero-3-phospho-L-serine + H(+) = a 1,2-diacyl-sn-glycero-3-phosphoethanolamine + CO2. Its pathway is phospholipid metabolism; phosphatidylethanolamine biosynthesis; phosphatidylethanolamine from CDP-diacylglycerol: step 2/2. Catalyzes the formation of phosphatidylethanolamine (PtdEtn) from phosphatidylserine (PtdSer). This is Phosphatidylserine decarboxylase proenzyme from Variovorax paradoxus (strain S110).